Consider the following 62-residue polypeptide: Large ribosomal subunit protein uL29 (62 aa).

This sequence belongs to the universal ribosomal protein uL29 family.

The protein is Large ribosomal subunit protein uL29 of Laribacter hongkongensis (strain HLHK9).